Reading from the N-terminus, the 291-residue chain is MTLSWPSPAKLNLFLYITGKRPDGYHNLQTLFQFLDYGDTLTFTPRNDTQLTILTPVEGVADEDNLIIKAAKLLRQYCYQHHIPLRYQGADISIDKKLPMGGGLGGGSSNAATTLIALNYHWQAGLSDETLATLGVTLGADVPVFVKGHAAFAEGIGEILTPASPKECWYLVAHPGISIPTPTIFTDPELKRNSPIRSLGALLQAPFANDCEMIARKRFREVEYLLSWLLEYAPSRLTGTGACVFGEFESQEAASEVLINAPEWVHGFVAQGVNISPVHLFRSRIPVLLHP.

Lysine 10 is an active-site residue. 99–109 contributes to the ATP binding site; that stretch reads PMGGGLGGGSS. Aspartate 141 is an active-site residue.

The protein belongs to the GHMP kinase family. IspE subfamily. In terms of assembly, homodimer.

It carries out the reaction 4-CDP-2-C-methyl-D-erythritol + ATP = 4-CDP-2-C-methyl-D-erythritol 2-phosphate + ADP + H(+). The protein operates within isoprenoid biosynthesis; isopentenyl diphosphate biosynthesis via DXP pathway; isopentenyl diphosphate from 1-deoxy-D-xylulose 5-phosphate: step 3/6. Its function is as follows. Catalyzes the phosphorylation of the position 2 hydroxy group of 4-diphosphocytidyl-2C-methyl-D-erythritol. This chain is 4-diphosphocytidyl-2-C-methyl-D-erythritol kinase, found in Proteus mirabilis (strain HI4320).